A 179-amino-acid chain; its full sequence is Large ribosomal subunit protein uL6 (179 aa).

Belongs to the universal ribosomal protein uL6 family. Part of the 50S ribosomal subunit.

Its function is as follows. This protein binds to the 23S rRNA, and is important in its secondary structure. It is located near the subunit interface in the base of the L7/L12 stalk, and near the tRNA binding site of the peptidyltransferase center. This chain is Large ribosomal subunit protein uL6, found in Mycobacterium leprae (strain Br4923).